A 228-amino-acid chain; its full sequence is Eukaryotic translation initiation factor 4E-1 (228 aa).

2 EIF4G-binding regions span residues 53-56 (HLLE) and 63-99 (FDTP…NNIH). MRNA contacts are provided by residues 71-76 (KQDDWG), Lys103, and 121-122 (WE). An intrachain disulfide couples Cys126 to Cys164. An EIF4G-binding region spans residues 147–156 (YTLLAMIGEQ). MRNA contacts are provided by residues 171-176 (RGRAEK) and 216-220 (RKLDR).

Belongs to the eukaryotic initiation factor 4E family. EIF4F is a multi-subunit complex, the composition of which varies with external and internal environmental conditions. It is composed of at least EIF4A, EIF4E and EIF4G. EIF4E is also known to interact with other partners. In higher plants two isoforms of EIF4F have been identified, named isoform EIF4F and isoform EIF(iso)4F. Isoform EIF4F has subunits p220 and p26, whereas isoform EIF(iso)4F has subunits p82 and p28. In terms of assembly, (Microbial infection) Interacts with potyvirus viral genome-linked protein (VPg); this interaction is possible in susceptible hosts but impaired in resistant plants. According to the redox status, the Cys-126-Cys-164 disulfide bridge may have a role in regulating protein function by affecting its ability to bind capped mRNA.

It localises to the nucleus. Its subcellular location is the cytoplasm. In terms of biological role, component of the protein complex eIF4F, which is involved in the recognition of the mRNA cap, ATP-dependent unwinding of 5'-terminal secondary structure and recruitment of mRNA to the ribosome. Recognizes and binds the 7-methylguanosine-containing mRNA cap during an early step in the initiation of protein synthesis and facilitates ribosome binding by inducing the unwinding of the mRNAs secondary structures. Key component of recessive resistance to potyviruses. Functionally, (Microbial infection) Susceptibility host factor required for viral infection by recruiting viral RNAs to the host ribosomal complex via an interaction with viral genome-linked protein (VPg). Also seems to be involved in virus movement from cell-to-cell. The protein is Eukaryotic translation initiation factor 4E-1 of Pisum sativum (Garden pea).